A 95-amino-acid polypeptide reads, in one-letter code: Phosphoribosyl-ATP pyrophosphatase (95 aa).

It belongs to the PRA-PH family.

Its subcellular location is the cytoplasm. The catalysed reaction is 1-(5-phospho-beta-D-ribosyl)-ATP + H2O = 1-(5-phospho-beta-D-ribosyl)-5'-AMP + diphosphate + H(+). The protein operates within amino-acid biosynthesis; L-histidine biosynthesis; L-histidine from 5-phospho-alpha-D-ribose 1-diphosphate: step 2/9. The sequence is that of Phosphoribosyl-ATP pyrophosphatase from Methanosphaera stadtmanae (strain ATCC 43021 / DSM 3091 / JCM 11832 / MCB-3).